Consider the following 326-residue polypeptide: Acetyl-coenzyme A carboxylase carboxyl transferase subunit alpha (326 aa).

A CoA carboxyltransferase C-terminal domain is found at 46-300 (EIEARAAELR…KEALLRHLDE (255 aa)).

This sequence belongs to the AccA family. In terms of assembly, acetyl-CoA carboxylase is a heterohexamer composed of biotin carboxyl carrier protein (AccB), biotin carboxylase (AccC) and two subunits each of ACCase subunit alpha (AccA) and ACCase subunit beta (AccD).

Its subcellular location is the cytoplasm. The enzyme catalyses N(6)-carboxybiotinyl-L-lysyl-[protein] + acetyl-CoA = N(6)-biotinyl-L-lysyl-[protein] + malonyl-CoA. The protein operates within lipid metabolism; malonyl-CoA biosynthesis; malonyl-CoA from acetyl-CoA: step 1/1. Component of the acetyl coenzyme A carboxylase (ACC) complex. First, biotin carboxylase catalyzes the carboxylation of biotin on its carrier protein (BCCP) and then the CO(2) group is transferred by the carboxyltransferase to acetyl-CoA to form malonyl-CoA. The sequence is that of Acetyl-coenzyme A carboxylase carboxyl transferase subunit alpha from Gloeobacter violaceus (strain ATCC 29082 / PCC 7421).